The following is a 1013-amino-acid chain: Poly [ADP-ribose] polymerase 1 (1013 aa).

N-acetylalanine is present on Ala2. The segment at 9 to 93 adopts a PARP-type 1 zinc-finger fold; that stretch reads YRVEYAKSGR…KVKKTAEAGG (85 aa). Cys21 and Cys24 together coordinate Zn(2+). Ser41 bears the Phosphoserine mark. Zn(2+)-binding residues include His53 and Cys56. N6-acetyllysine occurs at positions 97 and 105. The PARP-type 2 zinc finger occupies 113–203; the sequence is FAAEYAKSNR…VLKKQLPGVK (91 aa). Zn(2+) is bound by residues Cys125 and Cys128. Lys131 is subject to N6-acetyllysine. Positions 159 and 162 each coordinate Zn(2+). Phosphoserine occurs at positions 177, 179, and 185. Lys192 is covalently cross-linked (Glycyl lysine isopeptide (Lys-Gly) (interchain with G-Cter in SUMO2)). The disordered stretch occupies residues 198–233; sequence QLPGVKSEGKRKGDEVDGADEVAKKKSKKGKDKDSK. Lys203 is covalently cross-linked (Glycyl lysine isopeptide (Lys-Gly) (interchain with G-Cter in SUMO1); alternate). Lys203 participates in a covalent cross-link: Glycyl lysine isopeptide (Lys-Gly) (interchain with G-Cter in SUMO2); alternate. 2 consecutive short sequence motifs (nuclear localization signal) follow at residues 207–209 and 221–226; these read KRK and KKKSKK. The PADR1 zinc-binding domain occupies 225–359; that stretch reads KKGKDKDSKL…VKKQDRIFPP (135 aa). Lys249 is covalently cross-linked (Glycyl lysine isopeptide (Lys-Gly) (interchain with G-Cter in SUMO2)). 2 positions are modified to phosphoserine: Ser274 and Ser277. Residues 290-332 form a zinc ribbon region; it reads GALLPCKECSGQLVFKSDAYYCTGDVTAWTKCMVKTQTPSRKE. The Zn(2+) site is built by Cys295, Cys298, Cys311, and Cys321. Residues 357–383 form a disordered region; that stretch reads FPPETSAPAPPHLPPSVTSAPTAVNSS. Residues 372–383 show a composition bias toward polar residues; the sequence is SVTSAPTAVNSS. Positions 373-523 are automodification domain; that stretch reads VTSAPTAVNS…GVNKSEKRMK (151 aa). Positions 385–476 constitute a BRCT domain; the sequence is PADKPLSNMK…KSLQELLSAH (92 aa). Asp387 bears the PolyADP-ribosyl aspartic acid mark. PolyADP-ribosyl glutamic acid is present on residues Glu407, Glu413, Glu435, Glu437, Glu444, Glu445, and Glu456. Lys467 is covalently cross-linked (Glycyl lysine isopeptide (Lys-Gly) (interchain with G-Cter in SUMO2)). PolyADP-ribosyl glutamic acid occurs at positions 471 and 484. Lys486 is covalently cross-linked (Glycyl lysine isopeptide (Lys-Gly) (interchain with G-Cter in SUMO1); alternate). Lys486 is covalently cross-linked (Glycyl lysine isopeptide (Lys-Gly) (interchain with G-Cter in SUMO2); alternate). PolyADP-ribosyl glutamic acid is present on residues Glu488 and Glu491. A disordered region spans residues 495-516; it reads PKGKSAAPSKKSKGLYKEEGVN. ADP-ribosylserine occurs at positions 499, 503, and 506. A Glycyl lysine isopeptide (Lys-Gly) (interchain with G-Cter in SUMO2) cross-link involves residue Lys511. PolyADP-ribosyl glutamic acid is present on residues Glu512 and Glu513. An ADP-ribosylserine modification is found at Ser518. Glu519 bears the PolyADP-ribosyl glutamic acid mark. At Lys520 the chain carries N6-(ADP-ribosyl)lysine. Lys527 is covalently cross-linked (Glycyl lysine isopeptide (Lys-Gly) (interchain with G-Cter in SUMO2)). Positions 541-637 constitute a WGR domain; sequence SAHVLEKGGK…KNFTKYPKKF (97 aa). The residue at position 593 (Thr593) is a Phosphothreonine. 2 positions are modified to N6-acetyllysine: Lys599 and Lys620. One can recognise a PARP alpha-helical domain in the interval 661-778; it reads KSKLPKAVQE…DIEVAYSLLR (118 aa). Residue Lys747 forms a Glycyl lysine isopeptide (Lys-Gly) (interchain with G-Cter in SUMO1); alternate linkage. Lys747 participates in a covalent cross-link: Glycyl lysine isopeptide (Lys-Gly) (interchain with G-Cter in SUMO2); alternate. Phosphoserine is present on residues Ser781 and Ser785. The PARP catalytic domain maps to 787–1013; sequence DPIDVNYEKL…LKFNFKTSLW (227 aa). NAD(+)-binding positions include 861–863, Gly870, Arg877, and Ser903; that span reads HGS. The For poly [ADP-ribose] polymerase activity role is filled by Glu987.

The protein belongs to the ARTD/PARP family. In terms of assembly, homodimer; PARP-type zinc-fingers from separate PARP1 molecules form a dimer module that specifically recognizes DNA strand breaks. Heterodimer; heterodimerizes with PARP2. Interacts (via the PARP catalytic domain) with HPF1. Interacts with NMNAT1. Interacts with nucleosomes; with a preference for nucleosomes containing H2A.X. Interacts with APTX. Component of a base excision repair (BER) complex, containing at least XRCC1, PARP1, PARP2, POLB and LRIG3. Interacts with SRY. The SWAP complex consists of NPM1, NCL, PARP1 and SWAP70. Interacts with TIAM2. Interacts with PARP3; leading to activate PARP1 in absence of DNA. Interacts (when poly-ADP-ribosylated) with CHD1L (via macro domain). Interacts with the DNA polymerase alpha catalytic subunit POLA1; this interaction functions as part of the control of replication fork progression. Interacts with EEF1A1 and TXK. Interacts with RNF4. Interacts with RNF146. Interacts with ZNF423. Interacts with APLF. Interacts with SNAI1 (via zinc fingers); the interaction requires SNAI1 to be poly-ADP-ribosylated and non-phosphorylated (active) by GSK3B. Interacts (when poly-ADP-ribosylated) with PARP9. Interacts with NR4A3; activates PARP1 by improving acetylation of PARP1 and suppressing the interaction between PARP1 and SIRT1. Interacts (via catalytic domain) with PUM3; the interaction inhibits the poly-ADP-ribosylation activity of PARP1 and the degradation of PARP1 by CASP3 following genotoxic stress. Interacts with ZNF365. Interacts with RRP1B. Interacts with TIMELESS; the interaction is direct. Interacts with CGAS; leading to impede the formation of the PARP1-TIMELESS complex. Interacts with KHDC3L, the interaction is increased following the formation of DNA double-strand breaks. Interacts (when auto-poly-ADP-ribosylated) with XRCC1; leading to inhibit PARP1 ADP-ribosyltransferase activity. Interacts with SPINDOC; promoting PARP1 ADP-ribosyltransferase activity. Interacts with BANF1; leading to inhibit PARP1 ADP-ribosyltransferase activity in response to oxidative DNA damage. Interacts (when sumoylated and ubiquitinated) with VCP/p97; leading to its extraction from chromatin. Interacts with YARS1; promoting PARP1 ADP-ribosyltransferase activity. Interacts with PACMP micropeptide; Interacts with PACMP micropeptide; interaction. Interacts (when poly-ADP-ribosylated) with isoform 1 of MACROH2A1; MACROH2A1 specifically binds to poly-ADP-ribose chains and inhibits PARP1 activity, limiting the consumption of nuclear NAD(+). Interacts with CARM1; promoting recruitment to replication forks. Interacts with RECQL. Interacts with ZNF32; the interaction reshapes ZNF432 interacting proteins. Interacts with TPRN; TPRN interacts with a number of DNA damage response proteins, is recruited to sites of DNA damage and may play a role in DNA damage repair. As to quaternary structure, interacts (when auto-poly-ADP-ribosylated) with AIFM1. Post-translationally, poly-ADP-ribosylated on serine, glutamate and aspartate residues by autocatalysis. Auto-ADP-ribosylation on serine takes place following interaction with HPF1. Auto poly-ADP-ribosylation on serine residues promotes its dissociation from chromatin. Poly-ADP-ribosylated by PARP2; poly-ADP-ribosylation mediates the recruitment of CHD1L to DNA damage sites. Mono-ADP-ribosylated at Lys-520 by SIRT6 in response to oxidative stress, promoting recruitment to double-strand breaks (DSBs) sites. S-nitrosylated, leading to inhibit transcription regulation activity. In terms of processing, phosphorylated at Thr-593 by PRKDC in response to DNA damage following virus infection, promoting its translocation to the cytosol. Phosphorylated by TXK. Post-translationally, proteolytically cleaved by caspase-3 (CASP3) and caspase-7 (CASP7) in response to apoptosis to generate the Poly [ADP-ribose] polymerase 1, processed N-terminus and Poly [ADP-ribose] polymerase 1, processed C-terminus forms. Sumoylated with SUMO1 or SUMO2 by PIAS4 following prolonged residence (trapping) to chromatin. Sumoylation promotes ubiquitination by RNF4 and removal from chromatin by VCP/p97. In terms of processing, ubiquitinated by RNF4 following sumoylation by PIAS4 in response to prolonged residence (trapping) to chromatin. Ubiquitination promotes removal from chromatin by VCP/p97.

The protein localises to the chromosome. Its subcellular location is the nucleus. It localises to the nucleolus. It is found in the cytoplasm. The protein resides in the cytosol. It catalyses the reaction NAD(+) + (ADP-D-ribosyl)n-acceptor = nicotinamide + (ADP-D-ribosyl)n+1-acceptor + H(+).. The catalysed reaction is L-seryl-[protein] + NAD(+) = O-(ADP-D-ribosyl)-L-seryl-[protein] + nicotinamide + H(+). It carries out the reaction L-aspartyl-[protein] + NAD(+) = 4-O-(ADP-D-ribosyl)-L-aspartyl-[protein] + nicotinamide. The enzyme catalyses L-glutamyl-[protein] + NAD(+) = 5-O-(ADP-D-ribosyl)-L-glutamyl-[protein] + nicotinamide. It catalyses the reaction L-tyrosyl-[protein] + NAD(+) = O-(ADP-D-ribosyl)-L-tyrosyl-[protein] + nicotinamide + H(+). The catalysed reaction is L-histidyl-[protein] + NAD(+) = N(tele)-(ADP-D-ribosyl)-L-histidyl-[protein] + nicotinamide + H(+). Its activity is regulated as follows. ADP-ribosyltransferase activity is regulated via an allosteric activation mechanism. In absence of activation signal, PARP1 is autoinhibited by the PARP alpha-helical domain (also named HD region), which prevents effective NAD(+)-binding. Activity is highly stimulated by signals, such as DNA strand breaks. Binding to damaged DNA unfolds the PARP alpha-helical domain, relieving autoinhibition. Poly-ADP-ribosyltransferase activity is tightly regulated and PARP1 is removed from damaged chromatin following initial poly-ADP-ribosylation of chromatin to avoid prolonged residence (trapping) that has cytotoxic consequences. A number of factors (VCP/p97) or post-translational modifications (auto-poly-ADP-ribosylation or ubiquitination) promote PARP1 removal from chromatin. Functionally, poly-ADP-ribosyltransferase that mediates poly-ADP-ribosylation of proteins and plays a key role in DNA repair. Mediates glutamate, aspartate, serine, histidine or tyrosine ADP-ribosylation of proteins: the ADP-D-ribosyl group of NAD(+) is transferred to the acceptor carboxyl group of target residues and further ADP-ribosyl groups are transferred to the 2'-position of the terminal adenosine moiety, building up a polymer with an average chain length of 20-30 units. Serine ADP-ribosylation of proteins constitutes the primary form of ADP-ribosylation of proteins in response to DNA damage. Specificity for the different amino acids is conferred by interacting factors, such as HPF1 and NMNAT1. Following interaction with HPF1, catalyzes serine ADP-ribosylation of target proteins; HPF1 confers serine specificity by completing the PARP1 active site. Also catalyzes tyrosine ADP-ribosylation of target proteins following interaction with HPF1. Following interaction with NMNAT1, catalyzes glutamate and aspartate ADP-ribosylation of target proteins; NMNAT1 confers glutamate and aspartate specificity. PARP1 initiates the repair of DNA breaks: recognizes and binds DNA breaks within chromatin and recruits HPF1, licensing serine ADP-ribosylation of target proteins, such as histones (H2BS6ADPr and H3S10ADPr), thereby promoting decompaction of chromatin and the recruitment of repair factors leading to the reparation of DNA strand breaks. HPF1 initiates serine ADP-ribosylation but restricts the polymerase activity of PARP1 in order to limit the length of poly-ADP-ribose chains. In addition to base excision repair (BER) pathway, also involved in double-strand breaks (DSBs) repair: together with TIMELESS, accumulates at DNA damage sites and promotes homologous recombination repair by mediating poly-ADP-ribosylation. Mediates the poly-ADP-ribosylation of a number of proteins, including itself, APLF, CHFR and NFAT5. In addition to proteins, also able to ADP-ribosylate DNA: catalyzes ADP-ribosylation of DNA strand break termini containing terminal phosphates and a 2'-OH group in single- and double-stranded DNA, respectively. Required for PARP9 and DTX3L recruitment to DNA damage sites. PARP1-dependent PARP9-DTX3L-mediated ubiquitination promotes the rapid and specific recruitment of 53BP1/TP53BP1, UIMC1/RAP80, and BRCA1 to DNA damage sites. PARP1-mediated DNA repair in neurons plays a role in sleep: senses DNA damage in neurons and promotes sleep, facilitating efficient DNA repair. In addition to DNA repair, also involved in other processes, such as transcription regulation, programmed cell death, membrane repair, adipogenesis and innate immunity. Acts as a repressor of transcription: binds to nucleosomes and modulates chromatin structure in a manner similar to histone H1, thereby altering RNA polymerase II. Acts both as a positive and negative regulator of transcription elongation, depending on the context. Acts as a positive regulator of transcription elongation by mediating poly-ADP-ribosylation of NELFE, preventing RNA-binding activity of NELFE and relieving transcription pausing. Acts as a negative regulator of transcription elongation in response to DNA damage by catalyzing poly-ADP-ribosylation of CCNT1, disrupting the phase separation activity of CCNT1 and subsequent activation of CDK9. Involved in replication fork progression following interaction with CARM1: mediates poly-ADP-ribosylation at replication forks, slowing fork progression. Poly-ADP-ribose chains generated by PARP1 also play a role in poly-ADP-ribose-dependent cell death, a process named parthanatos. Also acts as a negative regulator of the cGAS-STING pathway. Acts by mediating poly-ADP-ribosylation of CGAS: PARP1 translocates into the cytosol following phosphorylation by PRKDC and catalyzes poly-ADP-ribosylation and inactivation of CGAS. Acts as a negative regulator of adipogenesis: catalyzes poly-ADP-ribosylation of histone H2B on 'Glu-35' (H2BE35ADPr) following interaction with NMNAT1, inhibiting phosphorylation of H2B at 'Ser-36' (H2BS36ph), thereby blocking expression of pro-adipogenetic genes. Involved in the synthesis of ATP in the nucleus, together with NMNAT1, PARG and NUDT5. Nuclear ATP generation is required for extensive chromatin remodeling events that are energy-consuming. Its function is as follows. Promotes AIFM1-mediated apoptosis. This form, which translocates into the cytoplasm following cleavage by caspase-3 (CASP3) and caspase-7 (CASP7) in response to apoptosis, is auto-poly-ADP-ribosylated and serves as a poly-ADP-ribose carrier to induce AIFM1-mediated apoptosis. In terms of biological role, this cleavage form irreversibly binds to DNA breaks and interferes with DNA repair, promoting DNA damage-induced apoptosis. This chain is Poly [ADP-ribose] polymerase 1 (PARP1), found in Cricetulus griseus (Chinese hamster).